Consider the following 500-residue polypeptide: MTIFDNYEVWFVIGSQHLYGAETLRQVTQHAEHVVNALNTEAKLPCKLVLKPLGTSPDEITAICRDANYDDRCAGLVVWLHTFSPAKMWINGLSILNKPLLQFHTQFNAALPWDSIDMDFMNLNQTAHGGREFGFIGARMRQQHSVVTGHWQDKEAHTRIGAWMRQAVSKQDTRQLKVCRFGDNMREVAVTDGDKVAAQIKFGFSVNTWAVGDLVQVVNAISDGDINALIDEYESSYTLTPATRIHGDKRQNVREAARIELGMKRFLEQGGFHAFTTTFEDLHGLKQLPGLAVQRLMQQGYGFAGEGDWKTAALLRIMKVMSTGLQGGTSFMEDYTYHFEKGNDLVLGSHMLEVCPSIAVEEKPILDVQHLGIGGKEDPARLIFNTQTGPAIVASLIDLGDRYRLLVNCIDTVKTPHSLPKLPVANALWKAQPDLPTASEAWILAGGAHHTVFSHALDLNDMRQFAEIHDIEIAVIDNDTRLPAFKDALRWNEVYYGFKR.

Mn(2+) contacts are provided by Glu-306, Glu-333, His-350, and His-450.

It belongs to the arabinose isomerase family. In terms of assembly, homohexamer. The cofactor is Mn(2+).

The catalysed reaction is beta-L-arabinopyranose = L-ribulose. The protein operates within carbohydrate degradation; L-arabinose degradation via L-ribulose; D-xylulose 5-phosphate from L-arabinose (bacterial route): step 1/3. Catalyzes the conversion of L-arabinose to L-ribulose. The protein is L-arabinose isomerase of Salmonella enteritidis PT4 (strain P125109).